The primary structure comprises 554 residues: Sesquithujene synthase A (554 aa).

Mg(2+) is bound by residues D308 and D312. Substrate is bound by residues D308 and D312. The DDXXD motif signature appears at 308–312; it reads DDMFD. The determine the stereoselectivity of the enzyme stretch occupies residues 407–411; it reads SIGAN. Substrate is bound by residues R449 and N452. Residues N452, S456, and E460 each contribute to the Mg(2+) site.

Belongs to the terpene synthase family. As to quaternary structure, monomer. It depends on Mg(2+) as a cofactor. Requires Mn(2+) as cofactor. As to expression, highly expressed in the husk. Detected in leaves.

The protein localises to the cytoplasm. The catalysed reaction is (2E,6E)-farnesyl diphosphate = sesquithujene + diphosphate. It carries out the reaction (2Z,6Z)-farnesyl diphosphate = (1S,5S,6S)-alpha-bergamotene + diphosphate. It catalyses the reaction (2E,6E)-farnesyl diphosphate = (E)-beta-farnesene + diphosphate. The enzyme catalyses (2E,6E)-farnesyl diphosphate = (S)-beta-bisabolene + diphosphate. The catalysed reaction is (2Z,6E)-farnesyl diphosphate = (-)-beta-curcumene + diphosphate. It carries out the reaction (2E,6E)-farnesyl diphosphate = gamma-curcumene + diphosphate. It catalyses the reaction (2E,6E)-farnesyl diphosphate = sesquisabinene B + diphosphate. Its pathway is secondary metabolite biosynthesis; terpenoid biosynthesis. Sesquiterpene synthase involved in the production after herbivore attack of a blend of volatiles that attracts natural enemies of herbivores. Converts farnesyl diphosphate to sesquithujene, (S)-beta-bisabolene, (Z)-alpha-bergamotene, sesquisabinene B and several minor products. Can also act in vitro as a monoterpene synthase, converting geranyl diphosphate to (S)-(-)-limonene, beta-myrcene and 11 other monoterpenes. The chain is Sesquithujene synthase A from Zea mays (Maize).